Consider the following 417-residue polypeptide: MTLSPEKQHVRPRDAADNDPVAVARGLAEKWRATAVERDRAGGSATAEREDLRASGLLSLLVPREYGGWGADWPTAIEVVREIAAADGSLGHLFGYHLTNAPMIELIGSQEQEEHLYTQIAQNNWWTGNASSENNSHVLDWKVRATPTEDGGYVLNGTKHFCSGAKGSDLLFVFGVVQDDSPQQGAIIAAAIPTSRAGVTPNDDWAAIGMRQTDSGSTDFHNVKVEPDEVLGAPNAFVLAFIQSERGSLFAPIAQLIFANVYLGIAHGALDAAREYTRTQARPWTPAGIQQATEDPYTIRSYGEFTIALQGADAAAREAAHLLQTVWDKGDALTPEDRGELMVKVSGVKALATNAALNISSGVFEVIGARGTHPRYGFDRFWRNVRTHSLHDPVSYKIADVGKHTLNGQYPIPGFTS.

A helical N-terminus region spans residues 18–124 (NDPVAVARGL…HLYTQIAQNN (107 aa)). FMN is bound by residues Tyr96, 129–134 (NASSEN), 159–163 (KHFCS), Arg282, 369–370 (AR), and His391. Residues 125-233 (WWTGNASSEN…KVEPDEVLGA (109 aa)) form a central beta-barrel N-terminus region. The tract at residues 131–142 (SSENNSHVLDWK) is lid loop. Positions 234–417 (PNAFVLAFIQ…GQYPIPGFTS (184 aa)) are helical C-terminus.

Belongs to the DszC flavin monooxygenase family. Homotetramer formed by a dimer of dimers; FMN binds between monomers of the homodimer.

Its subcellular location is the cytoplasm. It carries out the reaction dibenzothiophene + 2 FMNH2 + 2 O2 = dibenzothiophene 5,5-dioxide + 2 FMN + 2 H2O + 2 H(+). The enzyme catalyses dibenzothiophene + FMNH2 + O2 = dibenzothiophene 5-oxide + FMN + H2O + H(+). It catalyses the reaction dibenzothiophene 5-oxide + FMNH2 + O2 = dibenzothiophene 5,5-dioxide + FMN + H2O + H(+). The protein operates within sulfur metabolism; dibenzothiophene degradation. With respect to regulation, DBT degradation completely inhibited by Cu(2+), Mn(2+), p-chloromercuribenzoic acid, 2,2-bipyridyl, 1,10-phenanthroline, and strongly inhibited by Zn(2+), 5,5'- Dithiobis(2-nitrobenzoic acid) and 8-quinolinol. Functionally, catalyzes the first step of the '4S' desulfurization pathway that removes covalently bound sulfur from dibenzothiophene (DBT) without breaking carbon-carbon bonds. Sulfur dioxygenase which converts DBT to DBT-sulfone (DBTO2 or DBT 5,5-dioxide) in a stepwise manner. Also acts on thioxanthen-9-one and 4,6-dimethyl DBT and 2,8-dimethyl DBT. This chain is Dibenzothiophene monooxygenase, found in Rhodococcus erythropolis (Arthrobacter picolinophilus).